The chain runs to 602 residues: Aspartate--tRNA(Asp/Asn) ligase (602 aa).

Glu-170 contacts L-aspartate. The aspartate stretch occupies residues 194–197 (QLFK). Residue Arg-216 participates in L-aspartate binding. ATP is bound by residues 216–218 (RDE) and Gln-225. Residue His-448 coordinates L-aspartate. Glu-482 lines the ATP pocket. Arg-489 contributes to the L-aspartate binding site. An ATP-binding site is contributed by 534-537 (GWDR). Residues 559–602 (GGVDPLTDAPAPISAQQRKESGIDAKPEKKSEDKKSEGDTAEAK) are disordered. Basic and acidic residues predominate over residues 575–602 (QRKESGIDAKPEKKSEDKKSEGDTAEAK).

This sequence belongs to the class-II aminoacyl-tRNA synthetase family. Type 1 subfamily. Homodimer.

Its subcellular location is the cytoplasm. It carries out the reaction tRNA(Asx) + L-aspartate + ATP = L-aspartyl-tRNA(Asx) + AMP + diphosphate. Aspartyl-tRNA synthetase with relaxed tRNA specificity since it is able to aspartylate not only its cognate tRNA(Asp) but also tRNA(Asn). Reaction proceeds in two steps: L-aspartate is first activated by ATP to form Asp-AMP and then transferred to the acceptor end of tRNA(Asp/Asn). The protein is Aspartate--tRNA(Asp/Asn) ligase of Rhodococcus erythropolis (strain PR4 / NBRC 100887).